Consider the following 416-residue polypeptide: Adenylosuccinate synthetase (416 aa).

Residues 11–17 and 39–41 contribute to the GTP site; these read GDEGKGK and GHT. The active-site Proton acceptor is the Asp12. Mg(2+) is bound by residues Asp12 and Gly39. IMP is bound by residues 12-15, 37-40, Thr125, Arg139, Gln214, Thr229, and Arg290; these read DEGK and NAGH. The active-site Proton donor is His40. 286 to 292 contacts substrate; the sequence is TTTGRPR. Residues Arg292, 318 to 320, and 405 to 407 contribute to the GTP site; these read KLD and SLG.

Belongs to the adenylosuccinate synthetase family. In terms of assembly, homodimer. The cofactor is Mg(2+).

The protein localises to the cytoplasm. The enzyme catalyses IMP + L-aspartate + GTP = N(6)-(1,2-dicarboxyethyl)-AMP + GDP + phosphate + 2 H(+). It participates in purine metabolism; AMP biosynthesis via de novo pathway; AMP from IMP: step 1/2. In terms of biological role, plays an important role in the de novo pathway of purine nucleotide biosynthesis. Catalyzes the first committed step in the biosynthesis of AMP from IMP. This is Adenylosuccinate synthetase from Picrophilus torridus (strain ATCC 700027 / DSM 9790 / JCM 10055 / NBRC 100828 / KAW 2/3).